The chain runs to 472 residues: MMPRTIIEKIWDQHVIKKGEGKPDLLYIDLHLIHEVTSPQAFEGLRQKNRKVRRPQNTFATMDHNIPTVNRFEIKDDVAKRQVSALERNCEEFGIRLADLSSVDQGIVHVIGPELGLTLPGKTIVCGDSHTSTHGAFGALAFGIGTSEVEHVLSTQTLWQQKPKTLEIRVDGKLQKGVTAKDVILAIIGKYGVKFGAGYVIEYTGEVFRNMSMDERMTVCNMSIEAGARAGLIAPDETTFEYVKTKKYAPKGEDFEKAVEEWKNLKTDPGAVYDRTIVMDGSAISPMVTWGINPGMVLPVDETIPGPEAFLQEDDKKEAQRAYEYMGLEPYKKIEDITIEHVFIGSCTNSRMTDLRQAAEMIKGQKVADGVRAIVVPGSQSVKIQAEKEGLHKIFIEAGFEWRESGCSMCLSMNNDVVPEGERCASTSNRNFEGRQGKGARTHLVSPAMAAMAAIHGRFVDVRKYYQETTAV.

Residues C347, C407, and C410 each coordinate [4Fe-4S] cluster.

The protein belongs to the aconitase/IPM isomerase family. LeuC type 1 subfamily. As to quaternary structure, heterodimer of LeuC and LeuD. [4Fe-4S] cluster is required as a cofactor.

The enzyme catalyses (2R,3S)-3-isopropylmalate = (2S)-2-isopropylmalate. It functions in the pathway amino-acid biosynthesis; L-leucine biosynthesis; L-leucine from 3-methyl-2-oxobutanoate: step 2/4. Functionally, catalyzes the isomerization between 2-isopropylmalate and 3-isopropylmalate, via the formation of 2-isopropylmaleate. The polypeptide is 3-isopropylmalate dehydratase large subunit (Bacillus licheniformis (strain ATCC 14580 / DSM 13 / JCM 2505 / CCUG 7422 / NBRC 12200 / NCIMB 9375 / NCTC 10341 / NRRL NRS-1264 / Gibson 46)).